The sequence spans 451 residues: Methionine aminopeptidase 2-2 (451 aa).

The interval M1 to P97 is disordered. A compositionally biased stretch (polar residues) spans T19 to P28. The span at E35–G45 shows a compositional bias: acidic residues. Basic residues predominate over residues K60 to A73. Positions G74 to S83 are enriched in low complexity. A substrate-binding site is contributed by H204. 3 residues coordinate a divalent metal cation: D224, D235, and H304. H312 lines the substrate pocket. E337 and E432 together coordinate a divalent metal cation.

This sequence belongs to the peptidase M24A family. Methionine aminopeptidase eukaryotic type 2 subfamily. It depends on Co(2+) as a cofactor. Zn(2+) is required as a cofactor. Requires Mn(2+) as cofactor. The cofactor is Fe(2+).

The protein resides in the cytoplasm. It carries out the reaction Release of N-terminal amino acids, preferentially methionine, from peptides and arylamides.. Functionally, cotranslationally removes the N-terminal methionine from nascent proteins. The N-terminal methionine is often cleaved when the second residue in the primary sequence is small and uncharged (Met-Ala-, Cys, Gly, Pro, Ser, Thr, or Val). The polypeptide is Methionine aminopeptidase 2-2 (Leptosphaeria maculans (strain JN3 / isolate v23.1.3 / race Av1-4-5-6-7-8) (Blackleg fungus)).